A 483-amino-acid chain; its full sequence is Cobyric acid synthase (483 aa).

A GATase cobBQ-type domain is found at 252–430; it reads ALQVVAVAYP…LHRLFDSGPF (179 aa). The active-site Nucleophile is the Cys333. The active site involves His422.

The protein belongs to the CobB/CobQ family. CobQ subfamily.

It functions in the pathway cofactor biosynthesis; adenosylcobalamin biosynthesis. In terms of biological role, catalyzes amidations at positions B, D, E, and G on adenosylcobyrinic A,C-diamide. NH(2) groups are provided by glutamine, and one molecule of ATP is hydrogenolyzed for each amidation. This chain is Cobyric acid synthase, found in Halorhodospira halophila (strain DSM 244 / SL1) (Ectothiorhodospira halophila (strain DSM 244 / SL1)).